A 541-amino-acid polypeptide reads, in one-letter code: Calcium-dependent protein kinase 9 (541 aa).

Positions 1-75 (MGNCFAKNHG…PGLSPKTTTK (75 aa)) are disordered. Gly2 is lipidated: N-myristoyl glycine. The span at 14–54 (PQQNGNTTRSVEVGVTNQDPPSYTPQARTTQQPEKPGSVNS) shows a compositional bias: polar residues. Ser69 carries the post-translational modification Phosphoserine. The Protein kinase domain occupies 91–349 (YTLGKELGRG…AADVLQHPWL (259 aa)). ATP-binding positions include 97-105 (LGRGQFGVT) and Lys120. Asp215 (proton acceptor) is an active-site residue. Ser255 carries the post-translational modification Phosphoserine. The segment at 355–385 (ASDKPIDSAVLSRMKQFRAMNKLKKLALKVI) is autoinhibitory domain. EF-hand domains lie at 392 to 427 (EEIQ…LGSK), 428 to 463 (LTEA…RHRL), 464 to 499 (ESNE…YGMG), and 500 to 534 (DDAT…GNPQ). Residues Asp405, Asp407, Ser409, Thr411, Glu416, Asp441, Asp443, Asn445, Ser447, Glu452, Asp477, Asp479, Ser481, Tyr483, Glu488, Asp512, Asp514, Asp516, Arg518, and Glu523 each coordinate Ca(2+).

The protein belongs to the protein kinase superfamily. Ser/Thr protein kinase family. CDPK subfamily.

It is found in the cell membrane. The enzyme catalyses L-seryl-[protein] + ATP = O-phospho-L-seryl-[protein] + ADP + H(+). It carries out the reaction L-threonyl-[protein] + ATP = O-phospho-L-threonyl-[protein] + ADP + H(+). With respect to regulation, activated by calcium. Autophosphorylation may play an important role in the regulation of the kinase activity. May play a role in signal transduction pathways that involve calcium as a second messenger. This is Calcium-dependent protein kinase 9 (CPK9) from Arabidopsis thaliana (Mouse-ear cress).